The sequence spans 783 residues: Probable galactinol--sucrose galactosyltransferase 5 (783 aa).

Ser9 and Ser11 each carry phosphoserine.

This sequence belongs to the glycosyl hydrolases 36 family.

It catalyses the reaction alpha-D-galactosyl-(1-&gt;3)-1D-myo-inositol + sucrose = raffinose + myo-inositol. In terms of biological role, transglycosidase operating by a ping-pong reaction mechanism. Involved in the synthesis of raffinose, a major soluble carbohydrate in seeds, roots and tubers. This Arabidopsis thaliana (Mouse-ear cress) protein is Probable galactinol--sucrose galactosyltransferase 5 (RFS5).